The sequence spans 284 residues: Diaminopimelate epimerase (284 aa).

Substrate contacts are provided by N20, Q53, and N73. C82 (proton donor) is an active-site residue. Substrate-binding positions include 83 to 84, N167, N200, and 218 to 219; these read GN and ER. The active-site Proton acceptor is C227. 228-229 is a substrate binding site; that stretch reads GS.

It belongs to the diaminopimelate epimerase family. Homodimer.

The protein resides in the cytoplasm. The enzyme catalyses (2S,6S)-2,6-diaminopimelate = meso-2,6-diaminopimelate. Its pathway is amino-acid biosynthesis; L-lysine biosynthesis via DAP pathway; DL-2,6-diaminopimelate from LL-2,6-diaminopimelate: step 1/1. Functionally, catalyzes the stereoinversion of LL-2,6-diaminopimelate (L,L-DAP) to meso-diaminopimelate (meso-DAP), a precursor of L-lysine and an essential component of the bacterial peptidoglycan. The polypeptide is Diaminopimelate epimerase (Xylella fastidiosa (strain M12)).